The sequence spans 796 residues: MKHKLDVTINELRLKSIRKIVKRINTWGDEVKSYSDDALKQKTIEFKERLASGVDTLDTLLPEAYAVAREASWRVLGMYPKEVQLIGAIVLHEGNIAEMQTGEGKTLTATMPLYLNALSGKGTYLITTNDYLAKRDFEEMQPLYEWLGLTASLGFVDIVDYEYQKGEKRNLYEHDIIYTTNGRLGFDYLIDNLADSAEGKFLPQLNYGIIDEVDSIILDAAQTPLVISGAPRLQSNLFHIVKEFVDTLIEDVHFKMKKTKKEIWLLNQGIEAAQSYFNVEDLYSEQAMVLVRNINLALRAQYLFESNVDYFVYNGDIVLIDRITGRMLPGTKLQAGLHQAIEAKEGMEVSTDKSVMATITFQNLFKLFESFSGMTATGKLGESEFFDLYSKIVVQVPTDKAIQRIDEPDKVFRSVDEKNIAMIHDIVELHETGRPVLLITRTAEAAEYFSKVLFQMDIPNNLLIAQNVAKEAQMIAEAGQIGSMTVATSMAGRGTDIKLGEGVEALGGLAVIIHEHMENSRVDRQLRGRSGRQGDPGSSCIYISLDDYLVKRWSDSNLAENNQLYSLDAQRLSQSNLFNRKVKQIVVKAQRISEEQGVKAREMANEFEKSISIQRDLVYEERNRVLEIDDAENQDFKALAKDVFEMFVNEEKVLTKSRVVEYIYQNLSFQFNKDVACVNFKDKQAVVTFLLEQFEKQLALNRKNMQSAYYYNIFVQKVFLKAIDSCWLEQVDYLQQLKASVNQRQNGQRNAIFEYHRVALDSFEVMTRNIKKRMVKNICQSMITFDKEGMPVIHFP.

ATP-binding positions include Q84, 102-106 (GEGKT), and D496.

The protein belongs to the SecA family. In terms of assembly, monomer and homodimer. Part of the essential Sec protein translocation apparatus which comprises SecA, SecYEG and auxiliary proteins SecDF. Other proteins may also be involved.

The protein localises to the cell membrane. It is found in the cytoplasm. The catalysed reaction is ATP + H2O + cellular proteinSide 1 = ADP + phosphate + cellular proteinSide 2.. Part of the Sec protein translocase complex. Interacts with the SecYEG preprotein conducting channel. Has a central role in coupling the hydrolysis of ATP to the transfer of proteins into and across the cell membrane, serving as an ATP-driven molecular motor driving the stepwise translocation of polypeptide chains across the membrane. The chain is Protein translocase subunit SecA 2 from Staphylococcus aureus (strain MSSA476).